The following is a 338-amino-acid chain: Ketol-acid reductoisomerase (NADP(+)) (338 aa).

A KARI N-terminal Rossmann domain is found at 1-181 (MNVFYDKDAD…GGGRAGIIET (181 aa)). NADP(+)-binding positions include 24–27 (YGSQ), R47, and S52. The active site involves H107. Residue G133 coordinates NADP(+). The region spanning 182–327 (NFREETETDL…AKLRAMMPWI (146 aa)) is the KARI C-terminal knotted domain. D190, E194, E226, and E230 together coordinate Mg(2+). S251 is a substrate binding site.

The protein belongs to the ketol-acid reductoisomerase family. Requires Mg(2+) as cofactor.

The catalysed reaction is (2R)-2,3-dihydroxy-3-methylbutanoate + NADP(+) = (2S)-2-acetolactate + NADPH + H(+). The enzyme catalyses (2R,3R)-2,3-dihydroxy-3-methylpentanoate + NADP(+) = (S)-2-ethyl-2-hydroxy-3-oxobutanoate + NADPH + H(+). Its pathway is amino-acid biosynthesis; L-isoleucine biosynthesis; L-isoleucine from 2-oxobutanoate: step 2/4. The protein operates within amino-acid biosynthesis; L-valine biosynthesis; L-valine from pyruvate: step 2/4. Functionally, involved in the biosynthesis of branched-chain amino acids (BCAA). Catalyzes an alkyl-migration followed by a ketol-acid reduction of (S)-2-acetolactate (S2AL) to yield (R)-2,3-dihydroxy-isovalerate. In the isomerase reaction, S2AL is rearranged via a Mg-dependent methyl migration to produce 3-hydroxy-3-methyl-2-ketobutyrate (HMKB). In the reductase reaction, this 2-ketoacid undergoes a metal-dependent reduction by NADPH to yield (R)-2,3-dihydroxy-isovalerate. The polypeptide is Ketol-acid reductoisomerase (NADP(+)) (Burkholderia cenocepacia (strain HI2424)).